The sequence spans 101 residues: Gamma-secretase subunit PEN-2 (101 aa).

Residues 1 to 17 (MNLERIPNEEKLSLCRR) are Cytoplasmic-facing. The segment at residues 18 to 36 (YYLGGFAFLPFLWLVNILW) is an intramembrane region (helical). Residues 37–57 (FFKEAFLKPAYTEQPQIKSYV) lie on the Cytoplasmic side of the membrane. A helical transmembrane segment spans residues 58-78 (KKSALGLLLWVAVLTTWITVF). Residues 79–101 (QHFRAQWGEVGDYLSFTIPLGTA) are Lumenal-facing.

It belongs to the PEN-2 family. The functional gamma-secretase complex is composed of at least four polypeptides: a presenilin homodimer (psen1 or psen2), nicastrin (ncstn), aph1 (aph1a or aph1b) and psenen.

It localises to the endoplasmic reticulum membrane. It is found in the golgi apparatus. The protein resides in the golgi stack membrane. Its subcellular location is the cell membrane. The protein localises to the membrane. Essential subunit of the gamma-secretase complex, an endoprotease complex that catalyzes the intramembrane cleavage of integral membrane proteins such as Notch receptors and APP (amyloid-beta precursor protein). The gamma-secretase complex plays a role in Notch and Wnt signaling cascades and regulation of downstream processes via its role in processing key regulatory proteins. The chain is Gamma-secretase subunit PEN-2 (psenen) from Danio rerio (Zebrafish).